Consider the following 201-residue polypeptide: MSRYRGPRFKKIRRLGALPGLTSKRPKAGSDLRNQSRSVKKSQYRIRLEEKQKLRFHYGLTERQLLKYVRIAGKAKGSTGQVLLQLLEMRLDNILFRLGMALTIPQARQLVNHGHILVNGRIVDIPSYRCKPRDIITVKDDQNSRTLVQNLLDSSAPEELPNHLTLHTFQYEGLVNQIIDRKCVGLKINELLVVEYYSRQT.

The S4 RNA-binding domain maps to 89 to 152 (MRLDNILFRL…NSRTLVQNLL (64 aa)).

It belongs to the universal ribosomal protein uS4 family. In terms of assembly, part of the 30S ribosomal subunit. Contacts protein S5. The interaction surface between S4 and S5 is involved in control of translational fidelity.

The protein resides in the plastid. It is found in the chloroplast. One of the primary rRNA binding proteins, it binds directly to 16S rRNA where it nucleates assembly of the body of the 30S subunit. Functionally, with S5 and S12 plays an important role in translational accuracy. The polypeptide is Small ribosomal subunit protein uS4c (rps4) (Olimarabidopsis pumila (Dwarf rocket)).